Here is a 132-residue protein sequence, read N- to C-terminus: Small ribosomal subunit protein uS8 (132 aa).

Belongs to the universal ribosomal protein uS8 family. As to quaternary structure, part of the 30S ribosomal subunit. Contacts proteins S5 and S12.

In terms of biological role, one of the primary rRNA binding proteins, it binds directly to 16S rRNA central domain where it helps coordinate assembly of the platform of the 30S subunit. The sequence is that of Small ribosomal subunit protein uS8 from Bartonella henselae (strain ATCC 49882 / DSM 28221 / CCUG 30454 / Houston 1) (Rochalimaea henselae).